We begin with the raw amino-acid sequence, 151 residues long: Putative pre-16S rRNA nuclease (151 aa).

The protein belongs to the YqgF nuclease family.

It is found in the cytoplasm. In terms of biological role, could be a nuclease involved in processing of the 5'-end of pre-16S rRNA. This is Putative pre-16S rRNA nuclease from Nostoc sp. (strain PCC 7120 / SAG 25.82 / UTEX 2576).